A 448-amino-acid polypeptide reads, in one-letter code: Argininosuccinate synthase (448 aa).

ATP is bound by residues 17-25 and alanine 43; that span reads AFSGGLDTS. Tyrosine 99 is a binding site for L-citrulline. The ATP site is built by glycine 129 and threonine 131. Residues threonine 131, asparagine 135, and aspartate 136 each coordinate L-aspartate. Residue asparagine 135 coordinates L-citrulline. Aspartate 136 contributes to the ATP binding site. Arginine 139 and serine 192 together coordinate L-citrulline. Aspartate 194 is an ATP binding site. 3 residues coordinate L-citrulline: threonine 201, glutamate 203, and glutamate 280.

The protein belongs to the argininosuccinate synthase family. Type 2 subfamily. Homotetramer.

Its subcellular location is the cytoplasm. The enzyme catalyses L-citrulline + L-aspartate + ATP = 2-(N(omega)-L-arginino)succinate + AMP + diphosphate + H(+). Its pathway is amino-acid biosynthesis; L-arginine biosynthesis; L-arginine from L-ornithine and carbamoyl phosphate: step 2/3. The sequence is that of Argininosuccinate synthase from Pectobacterium carotovorum subsp. carotovorum (strain PC1).